The following is a 51-amino-acid chain: Cytochrome b559 subunit beta (51 aa).

Residues 26 to 42 traverse the membrane as a helical segment; that stretch reads WLAVHALTVPTIFFLGA. Residue His30 coordinates heme.

This sequence belongs to the PsbE/PsbF family. Heterodimer of an alpha subunit and a beta subunit. PSII is composed of 1 copy each of membrane proteins PsbA, PsbB, PsbC, PsbD, PsbE, PsbF, PsbH, PsbI, PsbJ, PsbK, PsbL, PsbM, PsbT, PsbX, Psb30/Ycf12, peripheral proteins PsbO, CyanoQ (PsbQ), PsbU, PsbV and a large number of cofactors. It forms dimeric complexes. The cofactor is heme b.

It localises to the cell inner membrane. Its function is as follows. This b-type cytochrome is tightly associated with the reaction center of photosystem II (PSII). PSII is a light-driven water:plastoquinone oxidoreductase that uses light energy to abstract electrons from H(2)O, generating O(2) and a proton gradient subsequently used for ATP formation. It consists of a core antenna complex that captures photons, and an electron transfer chain that converts photonic excitation into a charge separation. The protein is Cytochrome b559 subunit beta of Gloeobacter violaceus (strain ATCC 29082 / PCC 7421).